Reading from the N-terminus, the 157-residue chain is Recombination endonuclease VII (157 aa).

Positions 23 and 26 each coordinate Zn(2+). Asp-40 is a Ca(2+) binding site. Cys-58 and Cys-61 together coordinate Zn(2+). Asn-62 serves as a coordination point for Ca(2+).

Homodimer. Ca(2+) serves as cofactor. Requires Zn(2+) as cofactor.

Its function is as follows. Cleaves DNA cruciform and Y-structures as well as heteroduplex loops. Resolves Holliday junctions, recognizes a broad spectrum of DNA substrates ranging from branched DNAs to single base mismatches. In Enterobacteria phage T4 (Bacteriophage T4), this protein is Recombination endonuclease VII (49).